The sequence spans 299 residues: Glutamyl-Q tRNA(Asp) synthetase (299 aa).

L-glutamate contacts are provided by residues 9–13 (RFAPS) and Glu-45. The 'HIGH' region motif lies at 12 to 22 (PSPTGPLHFGS). Positions 101, 103, and 118 each coordinate Zn(2+). L-glutamate contacts are provided by Tyr-170 and Arg-188. A 'KMSKS' region motif is present at residues 226 to 230 (KLSKS). Lys-229 is a binding site for ATP. Residues 279–299 (QLLPRQRQRDRATCAYERQRD) form a disordered region. The segment covering 285-299 (RQRDRATCAYERQRD) has biased composition (basic and acidic residues).

The protein belongs to the class-I aminoacyl-tRNA synthetase family. GluQ subfamily. It depends on Zn(2+) as a cofactor.

In terms of biological role, catalyzes the tRNA-independent activation of glutamate in presence of ATP and the subsequent transfer of glutamate onto a tRNA(Asp). Glutamate is transferred on the 2-amino-5-(4,5-dihydroxy-2-cyclopenten-1-yl) moiety of the queuosine in the wobble position of the QUC anticodon. This chain is Glutamyl-Q tRNA(Asp) synthetase, found in Xanthomonas oryzae pv. oryzae (strain KACC10331 / KXO85).